We begin with the raw amino-acid sequence, 194 residues long: SRP-independent targeting protein 3 homolog (194 aa).

A run of 2 helical transmembrane segments spans residues 43–63 (ILYATVNIVQIGIFLYTKIII) and 110–130 (LVTIATTLFMHLYMGYAPPLL).

It belongs to the PHO88 family.

The protein localises to the endoplasmic reticulum membrane. In terms of biological role, may function in a SRP (signal recognition particle) and GET (guided entry of tail-anchored proteins) independent pathway for targeting a broad range of substrate proteins to the endoplasmic reticulum. Involved in inorganic phosphate uptake. Also involved in telomere length regulation and maintenance. The protein is SRP-independent targeting protein 3 homolog of Schizosaccharomyces pombe (strain 972 / ATCC 24843) (Fission yeast).